Reading from the N-terminus, the 425-residue chain is MKTKVAAIYGKRDVRLRVFELPEITDNELLVSVISDSVCLSTWKAALLGSEHKRVPDDLENHPVITGHECAGVIVEVGKNLTGKYKKGQRFVLQPAMGLPSGYSAGYSYEYFGGNATYMIIPEIAINLGCVLPYHGSYFAAASLAEPMCCIIGAYHANYHTTQYVYEHRMGVKPGGNIALLACAGPMGIGAIDYAINGGIQPSRVVVVDIDDKRLAQVQKLLPVELAASKGIELVYVNTKGMSDPVQMLRALTGDAGFDDIFVYAAVPAVVEMADELLAEDGCLNFFAGPTDKNFKVPFNFYNVHYNSTHVVGTSGGSTDDMKEAIALSATGQLQPSFMVTHIGGLDAVPETVLNLPDIPGGKKLIYNGVTMPLTAIADFAEKGKTDPLFKELARLVEETHGIWNEQAEKYLLAQFGVDIGEAAQ.

The protein to K.pneumoniae SorE.

This is an uncharacterized protein from Escherichia coli (strain K12).